A 582-amino-acid polypeptide reads, in one-letter code: DNA repair and recombination protein radC (582 aa).

The DNA-binding element occupies Lys-146 to Arg-150. A compositionally biased stretch (basic and acidic residues) spans Lys-194–Leu-204. Disordered stretches follow at residues Lys-194–Ala-226, Gln-310–Gln-400, and Ala-485–His-582. The span at Gln-326–Ser-335 shows a compositional bias: polar residues. Positions Ala-516–Ala-529 are enriched in low complexity.

The protein belongs to the RAD52 family. Part of a complex that includes RAD51, RAD52 and RAD59.

It localises to the nucleus. Its function is as follows. Involved in DNA double-strand break (DSB) repair and recombination. Promotes the annealing of complementary single-stranded DNA and by stimulation of the RAD51 recombinase. The sequence is that of DNA repair and recombination protein radC (radC) from Emericella nidulans (strain FGSC A4 / ATCC 38163 / CBS 112.46 / NRRL 194 / M139) (Aspergillus nidulans).